The sequence spans 398 residues: ATP-dependent RNA helicase eIF4A (398 aa).

Positions 25-53 (DSFDSMDLKPELLRGVYAYGFERPSAIQQ) match the Q motif motif. Residues 56–226 (IKPIIAGHDV…TKFMRDPIRI (171 aa)) enclose the Helicase ATP-binding domain. 69 to 76 (AQSGTGKT) is an ATP binding site. A DEAD box motif is present at residues 174–177 (DEAD). One can recognise a Helicase C-terminal domain in the interval 237 to 398 (GIKQFYIAVE…EMPMNVADLI (162 aa)).

It belongs to the DEAD box helicase family. eIF4A subfamily. In terms of assembly, component of the eIF4F complex, which composition varies with external and internal environmental conditions. It is composed of at least eIF4A, eIF4E and eIF4G.

Its subcellular location is the cytoplasm. The catalysed reaction is ATP + H2O = ADP + phosphate + H(+). ATP-dependent RNA helicase which is a subunit of the eIF4F complex involved in cap recognition and is required for mRNA binding to ribosome. In the current model of translation initiation, eIF4A unwinds RNA secondary structures in the 5'-UTR of mRNAs which is necessary to allow efficient binding of the small ribosomal subunit, and subsequent scanning for the initiator codon. This Aspergillus niger (strain ATCC MYA-4892 / CBS 513.88 / FGSC A1513) protein is ATP-dependent RNA helicase eIF4A (tif1).